We begin with the raw amino-acid sequence, 171 residues long: Large ribosomal subunit protein uL15 (171 aa).

The span at 1-10 (MKLNEISDNN) shows a compositional bias: polar residues. 2 disordered regions span residues 1–44 (MKLN…RSGV) and 150–171 (LPEAQPSEQEKKAARREANKAK). The span at 21 to 35 (RGIGSGKGKTAGRGQ) shows a compositional bias: gly residues. The segment covering 157-171 (EQEKKAARREANKAK) has biased composition (basic and acidic residues).

It belongs to the universal ribosomal protein uL15 family. Part of the 50S ribosomal subunit.

Binds to the 23S rRNA. The polypeptide is Large ribosomal subunit protein uL15 (Novosphingobium aromaticivorans (strain ATCC 700278 / DSM 12444 / CCUG 56034 / CIP 105152 / NBRC 16084 / F199)).